A 130-amino-acid polypeptide reads, in one-letter code: Small ribosomal subunit protein uS8 (130 aa).

It belongs to the universal ribosomal protein uS8 family. Part of the 30S ribosomal subunit.

In terms of biological role, one of the primary rRNA binding proteins, it binds directly to 16S rRNA central domain where it helps coordinate assembly of the platform of the 30S subunit. The chain is Small ribosomal subunit protein uS8 from Pyrobaculum islandicum (strain DSM 4184 / JCM 9189 / GEO3).